We begin with the raw amino-acid sequence, 398 residues long: Alpha-(1,3)-fucosyltransferase 4 (398 aa).

The Cytoplasmic segment spans residues methionine 1–proline 15. The chain crosses the membrane as a helical; Signal-anchor for type II membrane protein span at residues glycine 16–tryptophan 40. Residues lysine 41–glutamine 398 are Lumenal-facing. N-linked (GlcNAc...) asparagine glycosylation is found at asparagine 84, asparagine 183, and asparagine 311.

The protein belongs to the glycosyltransferase 10 family.

It localises to the golgi apparatus. Its subcellular location is the golgi stack membrane. It catalyses the reaction a beta-D-galactosyl-(1-&gt;4)-N-acetyl-beta-D-glucosaminyl derivative + GDP-beta-L-fucose = a beta-D-galactosyl-(1-&gt;4)-[alpha-L-fucosyl-(1-&gt;3)]-N-acetyl-beta-D-glucosaminyl derivative + GDP + H(+). The catalysed reaction is an N-acetyl-alpha-neuraminyl-(2-&gt;3)-beta-D-galactosyl-(1-&gt;4)-N-acetyl-beta-D-glucosaminyl derivative + GDP-beta-L-fucose = an alpha-Neu5Ac-(2-&gt;3)-beta-D-Gal-(1-&gt;4)-[alpha-L-Fuc-(1-&gt;3)]-beta-D-GlcNAc derivative + GDP + H(+). It carries out the reaction an alpha-Neu5Ac-(2-&gt;3)-beta-D-Gal-(1-&gt;4)-beta-D-GlcNAc-(1-&gt;3)-beta-D-Gal-(1-&gt;4)-beta-D-GlcNAc derivative + GDP-beta-L-fucose = an alpha-Neu5Ac-(2-&gt;3)-beta-D-Gal-(1-&gt;4)-beta-D-GlcNAc-(1-&gt;3)-beta-D-Gal-(1-&gt;4)-[alpha-L-Fuc-(1-&gt;3)]-beta-D-GlcNAc derivative + GDP + H(+). The enzyme catalyses an alpha-Neu5Ac-(2-&gt;3)-beta-D-Gal-(1-&gt;4)-beta-D-GlcNAc6S derivative + GDP-beta-L-fucose = an alpha-Neu5Ac-(2-&gt;3)-beta-D-Gal-(1-&gt;4)-[alpha-L-Fuc-(1-&gt;3)]-beta-D-GlcNAc6S derivative + GDP + H(+). Its pathway is protein modification; protein glycosylation. Catalyzes alpha(1-&gt;3) linkage of fucosyl moiety transferred from GDP-beta-L-fucose to N-acetyl glucosamine (GlcNAc) within type 2 lactosamine (LacNAc, Gal-beta(1-&gt;4)GlcNAc) glycan attached to N- or O-linked glycoproteins. Robustly fucosylates nonsialylated distal LacNAc unit of the polylactosamine chain to form Lewis X antigen (CD15), a glycan determinant known to mediate important cellular functions in development and immunity. Fucosylates with lower efficiency sialylated LacNAc acceptors to form sialyl Lewis X and 6-sulfo sialyl Lewis X determinants that serve as recognition epitopes for C-type lectins. Together with FUT7 contributes to SELE, SELL and SELP selectin ligand biosynthesis and selectin-dependent lymphocyte homing, leukocyte migration and blood leukocyte homeostasis. In a cell type specific manner, may also fucosylate the internal LacNAc unit of the polylactosamine chain to form VIM-2 antigen that serves as recognition epitope for SELE. This is Alpha-(1,3)-fucosyltransferase 4 (FUT4) from Bos taurus (Bovine).